A 102-amino-acid chain; its full sequence is Large ribosomal subunit protein bL21 (102 aa).

This sequence belongs to the bacterial ribosomal protein bL21 family. In terms of assembly, part of the 50S ribosomal subunit. Contacts protein L20.

This protein binds to 23S rRNA in the presence of protein L20. The protein is Large ribosomal subunit protein bL21 of Solidesulfovibrio magneticus (strain ATCC 700980 / DSM 13731 / RS-1) (Desulfovibrio magneticus).